Reading from the N-terminus, the 908-residue chain is Protein O-mannosyltransferase 1 (908 aa).

2 disordered regions span residues 1–85 (MYNN…SAIN) and 115–160 (GSVE…SGSR). Basic residues predominate over residues 21-31 (QRRKTTTRSRS). 2 stretches are compositionally biased toward polar residues: residues 39-54 (CTSE…NGAQ) and 132-149 (LTAT…SPTI). The chain crosses the membrane as a helical span at residues 190–210 (FTVNLSIDLFSWTLFLLAFCT). An N-linked (GlcNAc...) asparagine glycan is attached at Asn265. 5 helical membrane-spanning segments follow: residues 279–299 (VPIF…APAV), 311–328 (WAAA…SLLT), 331–351 (RFVL…ACLL), 370–390 (AGVL…ALAL), and 418–438 (LSRL…VFYV). MIR domains lie at 473–534 (PLAV…VKRP), 545–602 (PDVI…VEIL), and 608–664 (GDSW…VEEH). Transmembrane regions (helical) follow at residues 749–769 (VLIW…LAFY), 788–808 (FLMA…PYYF), 813–833 (LFLH…CFVV), and 857–877 (LALL…LPLS).

Belongs to the glycosyltransferase 39 family. Interacts with tw/POMT2.

Its subcellular location is the endoplasmic reticulum membrane. It catalyses the reaction a di-trans,poly-cis-dolichyl beta-D-mannosyl phosphate + L-seryl-[protein] = 3-O-(alpha-D-mannosyl)-L-seryl-[protein] + a di-trans,poly-cis-dolichyl phosphate + H(+). The enzyme catalyses a di-trans,poly-cis-dolichyl beta-D-mannosyl phosphate + L-threonyl-[protein] = 3-O-(alpha-D-mannosyl)-L-threonyl-[protein] + a di-trans,poly-cis-dolichyl phosphate + H(+). It participates in protein modification; protein glycosylation. Its function is as follows. Rt/POMT1 and tw/POMT2 function as a protein O-mannosyltransferase in association with each other to generate and maintain normal muscle development. This is Protein O-mannosyltransferase 1 from Drosophila pseudoobscura pseudoobscura (Fruit fly).